We begin with the raw amino-acid sequence, 66 residues long: Large ribosomal subunit protein uL29 (66 aa).

Belongs to the universal ribosomal protein uL29 family.

This is Large ribosomal subunit protein uL29 from Kosmotoga olearia (strain ATCC BAA-1733 / DSM 21960 / TBF 19.5.1).